The following is a 242-amino-acid chain: MISLVFVLLIGAAFATEDDKIVGGYECKAYSQTHQVSLNSGYHFCGGSLVNENWVVSAAHCYKSRVEVRLGEHNIKVTEGSEQFISSSRVIRHPNYSSYNIDNDIMLIKLSKPATLNTYVQPVALPTSCAPAGTMCTVSGWGNTMSSTADSNKLQCLNIPILSYSDCNNSYPGMITNAMFCAGYLEGGKDSCQGDSGGPVVCNGELQGVVSWGYGCAEPGNPGVYAKVCIFNDWLTSTMASY.

The N-terminal stretch at 1–15 (MISLVFVLLIGAAFA) is a signal peptide. Residues 16–20 (TEDDK) constitute a propeptide, activation peptide. The region spanning 21 to 240 (IVGGYECKAY…FNDWLTSTMA (220 aa)) is the Peptidase S1 domain. 6 cysteine pairs are disulfide-bonded: cysteine 27–cysteine 156, cysteine 45–cysteine 61, cysteine 129–cysteine 229, cysteine 136–cysteine 202, cysteine 167–cysteine 181, and cysteine 192–cysteine 216. Histidine 60 functions as the Charge relay system in the catalytic mechanism. Ca(2+) is bound by residues glutamate 72, asparagine 74, valine 77, and glutamate 82. Aspartate 104 functions as the Charge relay system in the catalytic mechanism. The active-site Charge relay system is the serine 196.

The protein belongs to the peptidase S1 family. Ca(2+) is required as a cofactor.

It is found in the secreted. The protein resides in the extracellular space. The enzyme catalyses Preferential cleavage: Arg-|-Xaa, Lys-|-Xaa.. This Salmo salar (Atlantic salmon) protein is Trypsin-1.